A 661-amino-acid chain; its full sequence is Heme transporter BhuA (661 aa).

Residues 1-23 form the signal peptide; that stretch reads MKFTRTLVLASTSLLATVATSQA. Residues 48–159 enclose the TBDR plug domain; that stretch reads KDNIEATGGT…AAGAIRYETV (112 aa). Residues 170–661 enclose the TBDR beta-barrel domain; the sequence is TFGARIIGSY…TFTFQTAFKF (492 aa).

This sequence belongs to the TonB-dependent receptor family.

It localises to the cell outer membrane. Heme transporter. The protein is Heme transporter BhuA (bhuA) of Brucella abortus biovar 1 (strain 9-941).